Reading from the N-terminus, the 398-residue chain is Odorant receptor 24a (398 aa).

Residues 1–14 (MLPRFLTASYPMER) are Cytoplasmic-facing. Residues 15–31 (HYFMVPKFALSLIGFYP) traverse the membrane as a helical segment. The Extracellular segment spans residues 32 to 46 (EQKRTVLVKLWSFFN). The helical transmembrane segment at 47–67 (FFILTYGCYAEAYYGIHYIPI) threads the bilayer. The Cytoplasmic segment spans residues 68-74 (NIATALD). A helical transmembrane segment spans residues 75-95 (ALCPVASSILSLVKMVAIWWY). The Extracellular portion of the chain corresponds to 96-124 (QDELRSLIERVRFLTEQQKSKRKLGYKKR). Residues 125–145 (FYTLATQLTFLLLCCGFCTST) form a helical membrane-spanning segment. Residues 146 to 199 (SYSVRHLIDNILRRTHGKDWIYETPFKMMFPDLLLRLPLYPITYILVHWHGYIT) lie on the Cytoplasmic side of the membrane. Residues 200 to 220 (VVCFVGADGFFLGFCLYFTVL) form a helical membrane-spanning segment. At 221–269 (LLCLQDDVCDLLEVENIEKSPSEAEEARIVREMEKLVDRHNEVAELTER) the chain is on the extracellular side. The chain crosses the membrane as a helical span at residues 270–290 (LSGVMVEITLAHFVTSSLIIG). At 291 to 295 (TSVVD) the chain is on the cytoplasmic side. Residues 296 to 316 (ILLFSGLGIIVYVVYTCAVGV) form a helical membrane-spanning segment. Over 317-398 (EIFLYCLGGS…SLIALAKSVI (82 aa)) the chain is Extracellular.

This sequence belongs to the insect chemoreceptor superfamily. Heteromeric odorant receptor channel (TC 1.A.69) family. Or1a subfamily. Interacts with Orco. Complexes exist early in the endomembrane system in olfactory sensory neurons (OSNs), coupling these complexes to the conserved ciliary trafficking pathway. As to expression, not expressed in either the antenna or maxillary palp.

The protein resides in the cell membrane. In terms of biological role, odorant receptor which mediates acceptance or avoidance behavior, depending on its substrates. The odorant receptor repertoire encodes a large collection of odor stimuli that vary widely in identity, intensity, and duration. May form a complex with Orco to form odorant-sensing units, providing sensitive and prolonged odorant signaling and calcium permeability. Involved in the behavioral responses to pentanol, hexanol, octanol, nonanol, propyl acetate, butyl acetate, isoamyl acetate, methyl caproate, anisole, heptanal, 2-heptanone, r-carvone, and nonanoic acid. Also responds to pyrazines. The protein is Odorant receptor 24a (Or24a) of Drosophila melanogaster (Fruit fly).